Here is a 117-residue protein sequence, read N- to C-terminus: Immunoglobulin heavy variable 4-38-2 (117 aa).

The signal sequence occupies residues 1-19 (MKHLWFFLLLVAAPRWVLS). Residues 20–44 (QVQLQESGPGLVKPSETLSLTCTVS) are framework-1. In terms of domain architecture, Ig-like spans 20 to 117 (QVQLQESGPG…ADTAVYYCAR (98 aa)). The cysteines at positions 41 and 115 are disulfide-linked. The complementarity-determining-1 stretch occupies residues 45–53 (GYSISSGYY). Residues 54–70 (WGWIRQPPGKGLEWIGS) form a framework-2 region. Residues 71–77 (IYHSGST) form a complementarity-determining-2 region. The interval 78–115 (YYNPSLKSRVTISVDTSKNQFSLKLSSVTAADTAVYYC) is framework-3. The interval 116-117 (AR) is complementarity-determining-3.

In terms of assembly, immunoglobulins are composed of two identical heavy chains and two identical light chains; disulfide-linked.

It is found in the secreted. Its subcellular location is the cell membrane. V region of the variable domain of immunoglobulin heavy chains that participates in the antigen recognition. Immunoglobulins, also known as antibodies, are membrane-bound or secreted glycoproteins produced by B lymphocytes. In the recognition phase of humoral immunity, the membrane-bound immunoglobulins serve as receptors which, upon binding of a specific antigen, trigger the clonal expansion and differentiation of B lymphocytes into immunoglobulins-secreting plasma cells. Secreted immunoglobulins mediate the effector phase of humoral immunity, which results in the elimination of bound antigens. The antigen binding site is formed by the variable domain of one heavy chain, together with that of its associated light chain. Thus, each immunoglobulin has two antigen binding sites with remarkable affinity for a particular antigen. The variable domains are assembled by a process called V-(D)-J rearrangement and can then be subjected to somatic hypermutations which, after exposure to antigen and selection, allow affinity maturation for a particular antigen. This is Immunoglobulin heavy variable 4-38-2 from Homo sapiens (Human).